The following is a 211-amino-acid chain: Riboflavin kinase (211 aa).

An H-T-H motif-like region spans residues 1–85 (MKKILMLIEL…CDKISNALSK (85 aa)). Residues 86–211 (GVIVGEVVSG…GDRVRLEVIQ (126 aa)) are riboflavin kinase. 95–100 (GLGEGA) serves as a coordination point for CDP. Positions 122 and 124 each coordinate Mg(2+). The FMN site is built by T178 and E186. CDP is bound at residue 191-194 (VNLR).

This sequence belongs to the archaeal riboflavin kinase family. Requires Mg(2+) as cofactor.

The enzyme catalyses riboflavin + CTP = CDP + FMN + H(+). Its pathway is cofactor biosynthesis; FMN biosynthesis; FMN from riboflavin (CTP route): step 1/1. Its function is as follows. Catalyzes the CTP-dependent phosphorylation of riboflavin (vitamin B2) to form flavin mononucleotide (FMN). This chain is Riboflavin kinase (ribK), found in Thermococcus kodakarensis (strain ATCC BAA-918 / JCM 12380 / KOD1) (Pyrococcus kodakaraensis (strain KOD1)).